A 281-amino-acid polypeptide reads, in one-letter code: Ras-related protein Rab-40C (281 aa).

4 residues coordinate GTP: S23, G26, K27, and S46. Residues 41–49 form a switch-I region; it reads SPYAYSNGI. Residues S46 and D69 each contribute to the Mg(2+) site. Residues G72, N126, and R127 each contribute to the GTP site. The switch-II stretch occupies residues 72–88; it reads GQGRFCTIFRSYSRGAQ. The SOCS box domain occupies 175–228; that stretch reads LMRHGMEKIWRPNRVFSLQDLCCRAIVSCTPVHLIDKLPLPVTIKSHLKSFSMA. Residues 245–281 form a disordered region; the sequence is SGAGGSGSKGNSLKRSKSIRPPQSPPQNCSRSNCKIS. The segment covering 270-281 has biased composition (polar residues); that stretch reads PQNCSRSNCKIS. C273 carries S-palmitoyl cysteine lipidation. Residue C278 is the site of S-geranylgeranyl cysteine attachment.

This sequence belongs to the small GTPase superfamily. Rab family. Component of the cullin-5-RING E3 ubiquitin-protein ligase complex (ECS(RAB40C) complex) composed of CUL5, Elongin BC (ELOB and ELOC), RNF7/RBX2 and RAB40C. Interacts with protein phosphatase 6 (PP6) complex components ANKRD28, ANKRD52, PPP6C, PP6R1 and PP6R2; the interaction leads to ANKRD28 ubiquitination and decreased PP6 activity. Interacts with DAB2IP; DAB2IP acts as a GAP for RAB40C. Mg(2+) is required as a cofactor.

It localises to the cell membrane. It is found in the cytoplasm. The protein localises to the cytosol. The protein resides in the golgi apparatus membrane. It carries out the reaction GTP + H2O = GDP + phosphate + H(+). Its pathway is protein modification; protein ubiquitination. Regulated by guanine nucleotide exchange factors (GEFs) which promote the exchange of bound GDP for free GTP. Regulated by GTPase activating proteins (GAPs) including DAB2IP, which increase the GTP hydrolysis activity. Inhibited by GDP dissociation inhibitors (GDIs). RAB40C small GTPase acts as substrate-recognition component of the ECS(RAB40C) E3 ubiquitin ligase complex which mediates the ubiquitination and subsequent proteasomal degradation of target proteins. The Rab40 subfamily belongs to the Rab family that are key regulators of intracellular membrane trafficking, from the formation of transport vesicles to their fusion with membranes. Rabs cycle between an inactive GDP-bound form and an active GTP-bound form that is able to recruit to membranes different sets of downstream effectors directly responsible for vesicle formation, movement, tethering and fusion. As part of the ECS(RAB40C) complex, mediates ANKRD28 ubiquitination and degradation, thereby inhibiting protein phosphatase 6 (PP6) complex activity and focal adhesion assembly during cell migration. Also negatively regulate lipid droplets accumulation in a GTP-dependent manner. In Mus musculus (Mouse), this protein is Ras-related protein Rab-40C.